Reading from the N-terminus, the 208-residue chain is Probable GTP-binding protein EngB (208 aa).

In terms of domain architecture, EngB-type G spans Leu-23–Thr-205. Residues Gly-31–Ser-38, Gly-57–Leu-61, Asp-84–Gly-87, Thr-154–Asp-157, and Phe-182–Ala-184 each bind GTP. Mg(2+)-binding residues include Ser-38 and Thr-59.

It belongs to the TRAFAC class TrmE-Era-EngA-EngB-Septin-like GTPase superfamily. EngB GTPase family. Mg(2+) serves as cofactor.

In terms of biological role, necessary for normal cell division and for the maintenance of normal septation. The sequence is that of Probable GTP-binding protein EngB from Helicobacter pylori (strain J99 / ATCC 700824) (Campylobacter pylori J99).